The sequence spans 518 residues: Lysine 5,6-aminomutase alpha subunit (518 aa).

Pyridoxal 5'-phosphate-binding positions include 184–189 (RTTGQS), serine 238, tyrosine 263, arginine 268, and asparagine 299.

The protein belongs to the KamD family. Heterotetramer of 2 alpha and 2 beta subunits. Adenosylcob(III)alamin is required as a cofactor. The cofactor is pyridoxal 5'-phosphate.

The catalysed reaction is (3S)-3,6-diaminohexanoate = (3S,5S)-3,5-diaminohexanoate. It carries out the reaction D-lysine = (2R,5S)-2,5-diaminohexanoate. The protein operates within amino-acid degradation; L-lysine degradation via acetate pathway. Its function is as follows. Catalyzes the migration of the L-beta-lysine and D-lysine epsilon amino group to the delta carbon to produce 3,5-diaminohexanoate and 2,5-diaminohexanoate, respectively. The sequence is that of Lysine 5,6-aminomutase alpha subunit from Fusobacterium nucleatum subsp. nucleatum (strain ATCC 25586 / DSM 15643 / BCRC 10681 / CIP 101130 / JCM 8532 / KCTC 2640 / LMG 13131 / VPI 4355).